The following is a 243-amino-acid chain: Adenylate dimethylallyltransferase (243 aa).

The enzyme catalyses dimethylallyl diphosphate + AMP = N(6)-(dimethylallyl)adenosine 5'-phosphate + diphosphate. Functionally, transfers dimethylallyl groups to AMP as part of the biosynthesis of cytokinin phytohormones. In Agrobacterium tumefaciens (strain T37), this protein is Adenylate dimethylallyltransferase (tzs).